Here is a 570-residue protein sequence, read N- to C-terminus: Apyrase (570 aa).

Residues 1 to 23 form the signal peptide; sequence MALVRFATIITVLCHLAIQDGAA. 3 residues coordinate a divalent metal cation: aspartate 43, histidine 45, and aspartate 94. N-linked (GlcNAc...) asparagine glycosylation occurs at asparagine 108. Residues asparagine 126, histidine 229, and histidine 253 each contribute to the a divalent metal cation site. Asparagine 287 and asparagine 326 each carry an N-linked (GlcNAc...) asparagine glycan. Arginine 367 serves as a coordination point for AMP. Asparagine 387 carries N-linked (GlcNAc...) asparagine glycosylation. Residues arginine 402 and aspartate 507 each contribute to the AMP site. N-linked (GlcNAc...) asparagine glycans are attached at residues asparagine 552 and asparagine 555.

Belongs to the 5'-nucleotidase family. Interacts with human PLAT; the interaction results in PLAT activation probably via an allosteric activation mechanism. Requires a divalent metal cation as cofactor. In terms of tissue distribution, saliva (at protein level). Salivary gland (at protein level). Not detected in midgut.

It is found in the secreted. It carries out the reaction a ribonucleoside 5'-triphosphate + 2 H2O = a ribonucleoside 5'-phosphate + 2 phosphate + 2 H(+). Its function is as follows. Cleaves adenosine triphosphate (ATP) and adenosine diphosphate (ADP) to adenosine monophosphate (AMP) and inorganic phosphate. Enhances fibrin degradation in the midgut blood bolus. Activates human tissue plasminogen activator (PLAT), probably via an allosteric activation mechanism. Inhibits ADP-mediated host platelet aggregation in vitro and in mosquito midgut. Inhibits host neutrophil activation in the mosquito midgut: reduces neutrophil extracellular traps formation in the presence of platelets and the formation of total cell- and mitochondrial-derived reactive oxygen species. Functionally, (Microbial infection) Promotes Plasmodium berghei parasite transmission from the mammalian host to the mosquito probably by reducing the blood bolus viscosity. Facilitates sporozoite transmission from the mosquito to the mammalian host during blood feeding. This is Apyrase from Anopheles gambiae (African malaria mosquito).